We begin with the raw amino-acid sequence, 312 residues long: Transcription initiation factor IIB-2 (312 aa).

Residues 2–34 (SDAFCSDCKRHTEVVFDHSAGDTVCSECGLVLE) form a TFIIB-type zinc finger. Residues Cys6, Cys9, Cys26, and Cys29 each coordinate Zn(2+). 2 tandem repeats follow at residues 115-192 (MADR…YIVK) and 216-290 (FCSN…DLYP).

It belongs to the TFIIB family. Associates with TFIID-IIA (DA complex) to form TFIID-IIA-IIB (DAB-complex) which is then recognized by polymerase II.

Its subcellular location is the nucleus. In terms of biological role, general factor that plays a major role in the activation of eukaryotic genes transcribed by RNA polymerase II. This is Transcription initiation factor IIB-2 (TFIIB2) from Arabidopsis thaliana (Mouse-ear cress).